Reading from the N-terminus, the 1016-residue chain is TBC1 domain family member 5 homolog B (1016 aa).

Disordered regions lie at residues 1–23, 60–109, 179–209, 463–566, and 704–872; these read MDTS…IRNS, SPLI…TTTT, NNNN…DMNN, PTQQ…EEEE, and PPTT…SSHV. The span at 12–23 shows a compositional bias: polar residues; it reads NSGTTTPNIRNS. Low complexity predominate over residues 79-88; the sequence is QQQQQQQQQQ. Residues 280–636 enclose the Rab-GAP TBC domain; it reads LKYSPLRGIA…NIWDALFAYG (357 aa). Low complexity predominate over residues 467 to 525; the sequence is TNNSNNSNNTNNNNTTTSPSSSSSSSSSSTTTAAATTVSSSTSTSSSSSTITSSSSSTV. A compositionally biased stretch (pro residues) spans 526 to 544; that stretch reads SPPPPSSSSSPSPPPPPPL. A compositionally biased stretch (low complexity) spans 545–558; it reads GSNSPTVASSSSSS. Positions 704–717 are enriched in polar residues; sequence PPTTLSSSGSRQIP. Low complexity-rich tracts occupy residues 718–755 and 766–789; these read NNNN…NNNI and PFPE…QLSS. Over residues 790-806 the composition is skewed to polar residues; the sequence is ANTTPIDPLSNKTTPLI. A compositionally biased stretch (low complexity) spans 807–872; that stretch reads SSTSNVSNTP…SSSLNNSSHV (66 aa).

Functionally, may act as a GTPase-activating protein for Rab family protein(s). The sequence is that of TBC1 domain family member 5 homolog B (tbc1d5B) from Dictyostelium discoideum (Social amoeba).